A 423-amino-acid polypeptide reads, in one-letter code: Serine--tRNA ligase (423 aa).

L-serine is bound at residue 231-233 (TAE). Residue 262-264 (RSE) coordinates ATP. Glu-285 provides a ligand contact to L-serine. Residue 349 to 352 (EISS) coordinates ATP. Ser-384 lines the L-serine pocket.

The protein belongs to the class-II aminoacyl-tRNA synthetase family. Type-1 seryl-tRNA synthetase subfamily. As to quaternary structure, homodimer. The tRNA molecule binds across the dimer.

It is found in the cytoplasm. It carries out the reaction tRNA(Ser) + L-serine + ATP = L-seryl-tRNA(Ser) + AMP + diphosphate + H(+). It catalyses the reaction tRNA(Sec) + L-serine + ATP = L-seryl-tRNA(Sec) + AMP + diphosphate + H(+). It functions in the pathway aminoacyl-tRNA biosynthesis; selenocysteinyl-tRNA(Sec) biosynthesis; L-seryl-tRNA(Sec) from L-serine and tRNA(Sec): step 1/1. In terms of biological role, catalyzes the attachment of serine to tRNA(Ser). Is also able to aminoacylate tRNA(Sec) with serine, to form the misacylated tRNA L-seryl-tRNA(Sec), which will be further converted into selenocysteinyl-tRNA(Sec). The sequence is that of Serine--tRNA ligase from Acinetobacter baylyi (strain ATCC 33305 / BD413 / ADP1).